Consider the following 619-residue polypeptide: Probable transporter mch1 (619 aa).

12 helical membrane passes run 88–108 (VISC…PLFL), 120–140 (AVSI…GYLC), 147–167 (PLAL…AFAY), 184–204 (VMVV…LAAV), 219–239 (IMLA…SQVA), 261–281 (FLFL…GLRI), 377–397 (TMWW…AYIN), 428–448 (IIAL…DFFA), 480–500 (LAFL…LSSP), 515–535 (LIGL…SVVW), 541–561 (GTNW…WGVI), and 589–609 (FWAV…ILAW).

Belongs to the major facilitator superfamily.

The protein resides in the vacuole membrane. In terms of biological role, probable transporter. The protein is Probable transporter mch1 (mch1) of Aspergillus fumigatus (strain ATCC MYA-4609 / CBS 101355 / FGSC A1100 / Af293) (Neosartorya fumigata).